Consider the following 338-residue polypeptide: Formimidoylglutamase (338 aa).

His-137, Asp-166, His-168, Asp-170, Cys-259, and Asp-261 together coordinate Mn(2+).

It belongs to the arginase family. It depends on Mn(2+) as a cofactor.

The enzyme catalyses N-formimidoyl-L-glutamate + H2O = formamide + L-glutamate. The protein operates within amino-acid degradation; L-histidine degradation into L-glutamate; L-glutamate from N-formimidoyl-L-glutamate (hydrolase route): step 1/1. Catalyzes the conversion of N-formimidoyl-L-glutamate to L-glutamate and formamide. The polypeptide is Formimidoylglutamase (Clostridium tetani (strain Massachusetts / E88)).